A 304-amino-acid polypeptide reads, in one-letter code: Putative S-adenosyl-L-methionine-dependent methyltransferase MAV_4236 (304 aa).

Residues Asp-129 and 158–159 contribute to the S-adenosyl-L-methionine site; that span reads DL.

Belongs to the UPF0677 family.

In terms of biological role, exhibits S-adenosyl-L-methionine-dependent methyltransferase activity. This chain is Putative S-adenosyl-L-methionine-dependent methyltransferase MAV_4236, found in Mycobacterium avium (strain 104).